Reading from the N-terminus, the 397-residue chain is GTPase Obg (397 aa).

In terms of domain architecture, Obg spans 1 to 159 (MKFVDEAEIR…RMLKLELMLL (159 aa)). A disordered region spans residues 22–44 (SFRREKYVPDGGPDGGDGGDGGS). The segment covering 33–43 (GPDGGDGGDGG) has biased composition (gly residues). In terms of domain architecture, OBG-type G spans 160–333 (ADVGLLGMPN…LCIKVMDFIE (174 aa)). Residues 166-173 (GMPNAGKS), 191-195 (FTTLV), 213-216 (DIPG), 283-286 (NKVD), and 314-316 (SAV) each bind GTP. Mg(2+)-binding residues include Ser173 and Thr193. A disordered region spans residues 359-389 (TVENYEDDDDFDDDDDDDFDGDDDDDFDGDD). Positions 361 to 389 (ENYEDDDDFDDDDDDDFDGDDDDDFDGDD) are enriched in acidic residues.

It belongs to the TRAFAC class OBG-HflX-like GTPase superfamily. OBG GTPase family. As to quaternary structure, monomer. The cofactor is Mg(2+).

The protein resides in the cytoplasm. An essential GTPase which binds GTP, GDP and possibly (p)ppGpp with moderate affinity, with high nucleotide exchange rates and a fairly low GTP hydrolysis rate. Plays a role in control of the cell cycle, stress response, ribosome biogenesis and in those bacteria that undergo differentiation, in morphogenesis control. The chain is GTPase Obg from Pseudoalteromonas atlantica (strain T6c / ATCC BAA-1087).